The chain runs to 1338 residues: Microtubule-associated tumor suppressor 1 homolog (1338 aa).

The span at 1–27 (MSVQTATTENRFQSTLDDNNGNNSESK) shows a compositional bias: polar residues. Disordered stretches follow at residues 1–28 (MSVQTATTENRFQSTLDDNNGNNSESKN) and 399–421 (ESHGEAHSLESPARPDSSSSELK). Residues 469-494 (ESITENNELQQNLDAIKYDLEGLRHS) are a coiled coil. Disordered stretches follow at residues 536–585 (KVLT…TVQK) and 636–695 (LKHT…MGPN). A compositionally biased stretch (polar residues) spans 541–555 (PSLQAKDSNPYASKT). 2 stretches are compositionally biased toward low complexity: residues 561 to 573 (PSLSNASSPAQSP) and 646 to 661 (ASSSNSTRSSGSAAAA). The F-box domain occupies 731-774 (IVPLPTKLAIPSSRNLHKELILGIKNVASQPAKGRVQTTVQRRG). Disordered regions lie at residues 788–808 (PPREKPQVTVEGGLNSPKGRP), 883–925 (ALTA…GPAL), and 938–962 (NVEKNKQKTSPRGPVTQAQTPPVDP). Positions 883–910 (ALTAKSSIPRGRSQSLKVTQTVTGTKKS) are enriched in polar residues. Residues 966-1298 (ELTKCKAACE…RLSMENEELL (333 aa)) are a coiled coil. A disordered region spans residues 1309–1338 (PKKLSPSSPGIPFHPSRNSGSFSSPTVSPR). Positions 1324–1338 (SRNSGSFSSPTVSPR) are enriched in polar residues.

It belongs to the MTUS1 family. As to quaternary structure, homodimer. Binds microtubules. Interacts with kif2c, aurkb, incenp and SKP1. Probably part of a SCF (SKP1-CUL1-F-box) protein ligase complex. In terms of tissue distribution, present in egg (at protein level).

It localises to the nucleus. The protein localises to the cytoplasm. Its subcellular location is the cytoskeleton. It is found in the chromosome. The protein resides in the midbody. Functionally, regulates microtubule dynamics during mitosis by stimulating kif2c. Probably recognizes and binds to some phosphorylated proteins and promotes their ubiquitination and degradation. This chain is Microtubule-associated tumor suppressor 1 homolog (mtus1), found in Xenopus laevis (African clawed frog).